A 397-amino-acid polypeptide reads, in one-letter code: Sexual differentiation process protein isp7 (397 aa).

The 99-residue stretch at 255–353 (PTTSIRLLRY…RYTIPFFLQG (99 aa)) folds into the Fe2OG dioxygenase domain.

It belongs to the iron/ascorbate-dependent oxidoreductase family.

The polypeptide is Sexual differentiation process protein isp7 (isp7) (Schizosaccharomyces pombe (strain 972 / ATCC 24843) (Fission yeast)).